Here is a 695-residue protein sequence, read N- to C-terminus: ATP-dependent DNA helicase II subunit 2 (695 aa).

The Ku domain occupies F229 to D461.

This sequence belongs to the ku80 family. As to quaternary structure, heterodimer of pku70 and pku80.

It localises to the nucleus. Its subcellular location is the chromosome. The protein localises to the telomere. The catalysed reaction is ATP + H2O = ADP + phosphate + H(+). Single-stranded DNA-dependent ATP-dependent helicase. Involved in non-homologous end joining (NHEJ) DNA double strand break repair. DNA-binding is sequence-independent but has a high affinity to nicks in double-stranded DNA and to the ends of duplex DNA. Binds to naturally occurring chromosomal ends, and therefore provides chromosomal end protection. Required also for telomere recombination to repair telomeric ends in the absence of telomerase. ku70, of the ku70/ku80 heterodimer, binds to the stem loop of tlc1, the RNA component of telomerase. Involved in telomere maintenance. Interacts with telomeric repeats and subtelomeric sequences thereby controlling telomere length and protecting against subtelomeric rearrangement. Required for mating-type switching. This chain is ATP-dependent DNA helicase II subunit 2 (pku80), found in Schizosaccharomyces pombe (strain 972 / ATCC 24843) (Fission yeast).